Here is a 95-residue protein sequence, read N- to C-terminus: Large ribosomal subunit protein bL28 (95 aa).

Positions 1–28 (MARKRTLGGKAPQAGNKVSHSQRKTRRQ) are disordered.

Belongs to the bacterial ribosomal protein bL28 family.

In Magnetococcus marinus (strain ATCC BAA-1437 / JCM 17883 / MC-1), this protein is Large ribosomal subunit protein bL28.